Consider the following 456-residue polypeptide: Probable hexose phosphate transport protein (456 aa).

11 consecutive transmembrane segments (helical) span residues 34-54 (IFYS…SFTF), 70-90 (LGII…VSGV), 113-133 (IFFG…INGW), 161-181 (VWST…GIAI), 185-205 (GWRG…FILI), 257-277 (YVLS…IYVV), 302-322 (LCVS…GWLS), 331-351 (GPMN…LWGT), 362-382 (AFLF…GLAA), 394-414 (ASGF…YPLG), and 421-441 (GWHG…LFFL).

The protein belongs to the major facilitator superfamily. Organophosphate:Pi antiporter (OPA) (TC 2.A.1.4) family.

The protein resides in the cell membrane. Transport protein for sugar phosphate uptake. The chain is Probable hexose phosphate transport protein from Chlamydia muridarum (strain MoPn / Nigg).